Here is a 181-residue protein sequence, read N- to C-terminus: tRNA (cytidine(56)-2'-O)-methyltransferase (181 aa).

S-adenosyl-L-methionine contacts are provided by residues L88, 115–119, and 133–140; these read GGEKV and IGNQPHSE.

The protein belongs to the aTrm56 family. Homodimer.

The protein localises to the cytoplasm. It carries out the reaction cytidine(56) in tRNA + S-adenosyl-L-methionine = 2'-O-methylcytidine(56) in tRNA + S-adenosyl-L-homocysteine + H(+). In terms of biological role, specifically catalyzes the AdoMet-dependent 2'-O-ribose methylation of cytidine at position 56 in tRNAs. This is tRNA (cytidine(56)-2'-O)-methyltransferase from Thermofilum pendens (strain DSM 2475 / Hrk 5).